Here is a 343-residue protein sequence, read N- to C-terminus: Anthranilate phosphoribosyltransferase (343 aa).

5-phospho-alpha-D-ribose 1-diphosphate contacts are provided by residues Gly84, 87–88 (GD), Thr92, 94–97 (NIST), 112–120 (KHGNRGVSS), and Ser124. Gly84 is a binding site for anthranilate. Residue Ser96 coordinates Mg(2+). Asn115 contributes to the anthranilate binding site. Arg170 serves as a coordination point for anthranilate. Mg(2+) contacts are provided by Asp229 and Glu230.

It belongs to the anthranilate phosphoribosyltransferase family. Homodimer. The cofactor is Mg(2+).

The enzyme catalyses N-(5-phospho-beta-D-ribosyl)anthranilate + diphosphate = 5-phospho-alpha-D-ribose 1-diphosphate + anthranilate. It functions in the pathway amino-acid biosynthesis; L-tryptophan biosynthesis; L-tryptophan from chorismate: step 2/5. Catalyzes the transfer of the phosphoribosyl group of 5-phosphorylribose-1-pyrophosphate (PRPP) to anthranilate to yield N-(5'-phosphoribosyl)-anthranilate (PRA). The sequence is that of Anthranilate phosphoribosyltransferase from Burkholderia vietnamiensis (strain G4 / LMG 22486) (Burkholderia cepacia (strain R1808)).